The primary structure comprises 244 residues: DNA repair protein RecO (244 aa).

This sequence belongs to the RecO family.

Functionally, involved in DNA repair and RecF pathway recombination. This chain is DNA repair protein RecO, found in Caldicellulosiruptor bescii (strain ATCC BAA-1888 / DSM 6725 / KCTC 15123 / Z-1320) (Anaerocellum thermophilum).